The primary structure comprises 121 residues: MNKRNHIRLPPEVNRLLYVRNLPYKITSDEMYDIFGKFGAIRQIRVGNTPETRGTAFVVYEDIFDAKNACDHLSGFNVCNRYLVVLYYQSNKAFKRVDMDKKQEELNNIKAKYNLKTPEAP.

Residues 12-25 (EVNRLLYVRNLPYK) form an interaction with pre-mRNA branch site region. The 76-residue stretch at 15–90 (RLLYVRNLPY…RYLVVLYYQS (76 aa)) folds into the RRM domain.

Belongs to the SF3B6 family. Component of splicing factor SF3B complex. Component of the U11/U12 snRNPs that are part of the U12-type spliceosome.

Its subcellular location is the nucleus. Involved in pre-mRNA splicing as a component of the splicing factor SF3B complex. SF3B complex is required for 'A' complex assembly formed by the stable binding of U2 snRNP to the branchpoint sequence (BPS) in pre-mRNA. Directly contacts the pre-mRNA branch site adenosine for the first catalytic step of splicing. Enters the spliceosome and associates with the pre-mRNA branch site as part of the 17S U2 or, in the case of the minor spliceosome, as part of the 18S U11/U12 snRNP complex, and thus may facilitate the interaction of these snRNP with the branch sites of U2 and U12 respectively. The polypeptide is Splicing factor 3B subunit 6 (Drosophila melanogaster (Fruit fly)).